Here is a 294-residue protein sequence, read N- to C-terminus: MAWVQIRLNSTDREAEKISDFLEDIGAVSVTFMNSQDTPIFEPLPGETRLWGNTDVVALFDAETDMKEIVSTLVKSKLVATDFPYKIEQIEDKDWEREWMDNFHPMQFGKRLWICPSWREIPDPNAVNVMLDPGLAFGTGTHPTTALCLTWLDSLDLTDKTVIDFGCGSGILAIAALKLGAKKAIGIDIDPQAILASQNNAEVNGVADRLQLFLTKDQPQNLIADVVIANILAGPLKELAPQIITLVKPQGNLGLSGILATQAESVCKAYQNSFKLDSIIEKEEWCRITGIKKH.

S-adenosyl-L-methionine is bound by residues Thr-145, Gly-166, Asp-188, and Asn-230.

It belongs to the methyltransferase superfamily. PrmA family.

The protein localises to the cytoplasm. The catalysed reaction is L-lysyl-[protein] + 3 S-adenosyl-L-methionine = N(6),N(6),N(6)-trimethyl-L-lysyl-[protein] + 3 S-adenosyl-L-homocysteine + 3 H(+). Methylates ribosomal protein L11. The sequence is that of Ribosomal protein L11 methyltransferase from Glaesserella parasuis serovar 5 (strain SH0165) (Haemophilus parasuis).